We begin with the raw amino-acid sequence, 387 residues long: TSC22 domain family protein 4 (387 aa).

2 disordered regions span residues M1–Y85 and I135–G232. The segment covering S28–D51 has biased composition (pro residues). Position 57 is a phosphothreonine (T57). A phosphoserine mark is found at S62 and S165. T183 bears the Phosphothreonine mark. Phosphoserine is present on residues S187 and S189. The residue at position 223 (T223) is a Phosphothreonine. 3 positions are modified to phosphoserine: S254, S258, and S271. A leucine-zipper region spans residues L336–L357. Phosphoserine is present on S362. Residues Q368–I387 are disordered.

This sequence belongs to the TSC-22/Dip/Bun family. As to quaternary structure, forms a homodimer or heterodimer. Forms a heterodimer with TSC22D1 isoforms 1 and 2. Interacts with NRBP1.

It is found in the nucleus. The protein resides in the cytoplasm. It localises to the cell projection. The protein localises to the dendrite. Its subcellular location is the synapse. Binds DNA and acts as a transcriptional repressor. Involved in the regulation of systematic glucose homeostasis and insulin sensitivity, via transcriptional repression of downstream insulin signaling targets such as OBP2A/LCN13. Acts as a negative regulator of lipogenic gene expression in hepatocytes and thereby mediates the control of very low-density lipoprotein release. May play a role in neurite elongation and survival. The chain is TSC22 domain family protein 4 from Rattus norvegicus (Rat).